Reading from the N-terminus, the 130-residue chain is Acidic phospholipase A2 daboiatoxin B chain (130 aa).

The N-terminal stretch at 1–8 (MCLIGVEG) is a signal peptide. Intrachain disulfides connect cysteine 34–cysteine 123, cysteine 36–cysteine 52, cysteine 51–cysteine 103, cysteine 57–cysteine 130, cysteine 58–cysteine 96, cysteine 65–cysteine 89, and cysteine 83–cysteine 94. Ca(2+) is bound by residues tyrosine 35, glycine 37, and glycine 39. Histidine 55 is an active-site residue. Aspartate 56 lines the Ca(2+) pocket. The active site involves aspartate 97.

This sequence belongs to the phospholipase A2 family. Group II subfamily. D49 sub-subfamily. In terms of assembly, heterodimer of an acidic protein having phospholipase A2 activity (B chain) and an A chain which weakly inhibits the B chain enzymatic activity but potentiates its lethal potency. Requires Ca(2+) as cofactor. As to expression, expressed by the venom gland.

Its subcellular location is the secreted. The catalysed reaction is a 1,2-diacyl-sn-glycero-3-phosphocholine + H2O = a 1-acyl-sn-glycero-3-phosphocholine + a fatty acid + H(+). Its function is as follows. Monomer: Snake venom phospholipase A2 (PLA2) that shows a high PLA2 activity (2110 umol/min/mg). Functionally, heterodimer (A and B chains): snake venom phospholipase A2 that shows a moderate PLA2 activity (1377 umol/min/mg). Acts as a presynaptic neurotoxin. In vivo, induces edema and produces neurotoxic symptoms in mice. It exhibits indirect hemolysis and a strong myonecrotic activity and is cytotoxic. PLA2 catalyzes the calcium-dependent hydrolysis of the 2-acyl groups in 3-sn-phosphoglycerides. In Daboia siamensis (Eastern Russel's viper), this protein is Acidic phospholipase A2 daboiatoxin B chain.